We begin with the raw amino-acid sequence, 108 residues long: UPF0060 membrane protein Rsph17029_0436 (108 aa).

Transmembrane regions (helical) follow at residues 5–25, 32–52, 62–82, and 86–106; these read LAAY…VWAW, ALWL…LALT, AVYG…VEGV, and RWDM…LWAP.

This sequence belongs to the UPF0060 family.

It is found in the cell inner membrane. This Cereibacter sphaeroides (strain ATCC 17029 / ATH 2.4.9) (Rhodobacter sphaeroides) protein is UPF0060 membrane protein Rsph17029_0436.